A 478-amino-acid chain; its full sequence is Protein nucleotidyltransferase YdiU (478 aa).

ATP is bound by residues glycine 84, glycine 86, arginine 87, lysine 107, aspartate 119, glycine 120, arginine 170, and arginine 177. Catalysis depends on aspartate 246, which acts as the Proton acceptor. Residues asparagine 247 and aspartate 256 each contribute to the Mg(2+) site. Residue aspartate 256 participates in ATP binding.

This sequence belongs to the SELO family. Mg(2+) serves as cofactor. The cofactor is Mn(2+).

It catalyses the reaction L-seryl-[protein] + ATP = 3-O-(5'-adenylyl)-L-seryl-[protein] + diphosphate. It carries out the reaction L-threonyl-[protein] + ATP = 3-O-(5'-adenylyl)-L-threonyl-[protein] + diphosphate. The enzyme catalyses L-tyrosyl-[protein] + ATP = O-(5'-adenylyl)-L-tyrosyl-[protein] + diphosphate. The catalysed reaction is L-histidyl-[protein] + UTP = N(tele)-(5'-uridylyl)-L-histidyl-[protein] + diphosphate. It catalyses the reaction L-seryl-[protein] + UTP = O-(5'-uridylyl)-L-seryl-[protein] + diphosphate. It carries out the reaction L-tyrosyl-[protein] + UTP = O-(5'-uridylyl)-L-tyrosyl-[protein] + diphosphate. Nucleotidyltransferase involved in the post-translational modification of proteins. It can catalyze the addition of adenosine monophosphate (AMP) or uridine monophosphate (UMP) to a protein, resulting in modifications known as AMPylation and UMPylation. The polypeptide is Protein nucleotidyltransferase YdiU (Escherichia coli O1:K1 / APEC).